Reading from the N-terminus, the 398-residue chain is Putative transposase y4qJ (398 aa).

Belongs to the transposase 32 family.

In Sinorhizobium fredii (strain NBRC 101917 / NGR234), this protein is Putative transposase y4qJ.